The primary structure comprises 387 residues: Phosphoglycerate kinase (387 aa).

Residues 21–23 (DLN), Arg36, 59–62 (HLGR), Arg113, and Arg146 each bind substrate. ATP-binding positions include Lys197, Glu314, and 340-343 (GGDT).

It belongs to the phosphoglycerate kinase family. Monomer.

It is found in the cytoplasm. The enzyme catalyses (2R)-3-phosphoglycerate + ATP = (2R)-3-phospho-glyceroyl phosphate + ADP. It participates in carbohydrate degradation; glycolysis; pyruvate from D-glyceraldehyde 3-phosphate: step 2/5. This Sodalis glossinidius (strain morsitans) protein is Phosphoglycerate kinase.